The sequence spans 83 residues: Conotoxin LiCr95 (83 aa).

Residues 1–22 form the signal peptide; sequence MKLTCALIVAMLFLTACQLTTT. A propeptide spanning residues 23-50 is cleaved from the precursor; sequence DDSRGRQKYPTERLRVKMRNPKLSKLTK. Cystine bridges form between C52–C67, C59–C71, and C66–C80.

The protein belongs to the conotoxin O1 superfamily. Expressed by the venom duct.

It localises to the secreted. This chain is Conotoxin LiCr95, found in Conus lividus (Livid cone).